The chain runs to 337 residues: Biotin synthase (337 aa).

In terms of domain architecture, Radical SAM core spans 58 to 283 (PEVEVEGIIS…RTILRFAGGR (226 aa)). C73, C77, and C80 together coordinate [4Fe-4S] cluster. [2Fe-2S] cluster-binding residues include C116, C149, C208, and R278.

It belongs to the radical SAM superfamily. Biotin synthase family. Homodimer. The cofactor is [4Fe-4S] cluster. It depends on [2Fe-2S] cluster as a cofactor.

It carries out the reaction (4R,5S)-dethiobiotin + (sulfur carrier)-SH + 2 reduced [2Fe-2S]-[ferredoxin] + 2 S-adenosyl-L-methionine = (sulfur carrier)-H + biotin + 2 5'-deoxyadenosine + 2 L-methionine + 2 oxidized [2Fe-2S]-[ferredoxin]. It functions in the pathway cofactor biosynthesis; biotin biosynthesis; biotin from 7,8-diaminononanoate: step 2/2. In terms of biological role, catalyzes the conversion of dethiobiotin (DTB) to biotin by the insertion of a sulfur atom into dethiobiotin via a radical-based mechanism. The protein is Biotin synthase of Rhodococcus jostii (strain RHA1).